Reading from the N-terminus, the 210-residue chain is Mitochondrial import receptor subunit TOM20-2 (210 aa).

Met1 bears the N-acetylmethionine mark. Over 1-178 (MEFSTADFER…SSKKKKRNTE (178 aa)) the chain is Cytoplasmic. TPR repeat units lie at residues 42–75 (LLELSQFQPIPEAKLMLNDAISKLEEALTINPGK) and 83–120 (ANAYTAHAFYVHDPEEAKEHFDKATEYFQRAENEDPGN). Positions 151-161 (GGGGGGGGGGM) are enriched in gly residues. Positions 151–172 (GGGGGGGGGGMASSNVSQSSKK) are disordered. Residues 179–199 (FTYDVCGWIILACGIVAWVGM) form a helical membrane-spanning segment. Residues 200–210 (AKSLGPPPPAR) are Mitochondrial intermembrane-facing.

The protein belongs to the Tom20 family. As to quaternary structure, forms part of the preprotein translocase complex of the outer mitochondrial membrane (TOM complex) which consists of at least 6 different proteins (TOM5, TOM6, TOM7, TOM20, TOM22/TOM9 and TOM40). Component of a mitochondrial large protein complex that contains, at least, MIC60, DGS1, TOM40, TOM20 proteins, and petC/RISP. Post-translationally, the N-terminus is blocked. As to expression, expressed in roots, flowers, young cotyledons and leaves.

Its subcellular location is the mitochondrion outer membrane. Its function is as follows. Central component of the receptor complex responsible for the recognition and translocation of cytosolically synthesized mitochondrial preproteins. Together with TOM22 functions as the transit peptide receptor at the surface of the mitochondrion outer membrane and facilitates the movement of preproteins into the translocation pore. In Arabidopsis thaliana (Mouse-ear cress), this protein is Mitochondrial import receptor subunit TOM20-2.